Consider the following 229-residue polypeptide: Putative N-acetylmannosamine-6-phosphate 2-epimerase (229 aa).

It belongs to the NanE family.

The enzyme catalyses an N-acyl-D-glucosamine 6-phosphate = an N-acyl-D-mannosamine 6-phosphate. Its pathway is amino-sugar metabolism; N-acetylneuraminate degradation; D-fructose 6-phosphate from N-acetylneuraminate: step 3/5. Its function is as follows. Converts N-acetylmannosamine-6-phosphate (ManNAc-6-P) to N-acetylglucosamine-6-phosphate (GlcNAc-6-P). This is Putative N-acetylmannosamine-6-phosphate 2-epimerase from Escherichia coli O139:H28 (strain E24377A / ETEC).